The following is a 564-amino-acid chain: O-fucosyltransferase 5 (564 aa).

The segment at 1 to 28 is disordered; the sequence is MVRNSSDEEEDHRNLIPQNDTRDNDLNL. A helical; Signal-anchor for type II membrane protein membrane pass occupies residues 70–90; it reads YVVAAVSLTLFVGLLFLFTDT. Asn129, Asn134, and Asn174 each carry an N-linked (GlcNAc...) asparagine glycan. Residues 413–415 and 529–530 each bind substrate; these read HLR and TF.

It belongs to the glycosyltransferase GT106 family.

It localises to the membrane. It participates in glycan metabolism. The polypeptide is O-fucosyltransferase 5 (Arabidopsis thaliana (Mouse-ear cress)).